The chain runs to 347 residues: DNA-directed RNA polymerase subunit alpha (347 aa).

Residues 1–226 are alpha N-terminal domain (alpha-NTD); that stretch reads MLISQRPTLS…ELFGLARELN (226 aa). The alpha C-terminal domain (alpha-CTD) stretch occupies residues 243-347; it reads HIASFALPID…EQDYAETEQL (105 aa).

This sequence belongs to the RNA polymerase alpha chain family. As to quaternary structure, homodimer. The RNAP catalytic core consists of 2 alpha, 1 beta, 1 beta' and 1 omega subunit. When a sigma factor is associated with the core the holoenzyme is formed, which can initiate transcription.

It catalyses the reaction RNA(n) + a ribonucleoside 5'-triphosphate = RNA(n+1) + diphosphate. Its function is as follows. DNA-dependent RNA polymerase catalyzes the transcription of DNA into RNA using the four ribonucleoside triphosphates as substrates. The polypeptide is DNA-directed RNA polymerase subunit alpha (Mycobacterium bovis (strain ATCC BAA-935 / AF2122/97)).